An 825-amino-acid chain; its full sequence is Translation initiation factor IF-2 (825 aa).

Composition is skewed to basic and acidic residues over residues 1 to 19 (MTKKQENETSKELGMDNKK), 35 to 45 (RKGEKKTEGKR), 70 to 98 (LLKDLKQKQRADEARLDQESKAAKQEYKK), and 113 to 122 (KKVESVEKPA). The interval 1–239 (MTKKQENETS…TQRKDRPLPE (239 aa)) is disordered. A compositionally biased stretch (low complexity) spans 158–169 (PSSSRRPSSRPS). The span at 181-191 (GRRRKSGKPGR) shows a compositional bias: basic residues. A compositionally biased stretch (polar residues) spans 194-208 (QNSYADQGRGANSNR). Over residues 211–220 (QRKRKNKKHQ) the composition is skewed to basic residues. The tr-type G domain occupies 326–495 (VRPPVVTIMG…ILEADMLELK (170 aa)). Residues 335–342 (GHVDHGKT) are G1. 335-342 (GHVDHGKT) provides a ligand contact to GTP. The interval 360-364 (GITQN) is G2. Residues 381 to 384 (DTPG) form a G3 region. GTP is bound by residues 381–385 (DTPGH) and 435–438 (NKMD). Positions 435–438 (NKMD) are G4. The segment at 471-473 (SAK) is G5.

The protein belongs to the TRAFAC class translation factor GTPase superfamily. Classic translation factor GTPase family. IF-2 subfamily.

It localises to the cytoplasm. Its function is as follows. One of the essential components for the initiation of protein synthesis. Protects formylmethionyl-tRNA from spontaneous hydrolysis and promotes its binding to the 30S ribosomal subunits. Also involved in the hydrolysis of GTP during the formation of the 70S ribosomal complex. This Lactobacillus delbrueckii subsp. bulgaricus (strain ATCC 11842 / DSM 20081 / BCRC 10696 / JCM 1002 / NBRC 13953 / NCIMB 11778 / NCTC 12712 / WDCM 00102 / Lb 14) protein is Translation initiation factor IF-2.